The sequence spans 475 residues: Aspartyl/glutamyl-tRNA(Asn/Gln) amidotransferase subunit B (475 aa).

It belongs to the GatB/GatE family. GatB subfamily. In terms of assembly, heterotrimer of A, B and C subunits.

The catalysed reaction is L-glutamyl-tRNA(Gln) + L-glutamine + ATP + H2O = L-glutaminyl-tRNA(Gln) + L-glutamate + ADP + phosphate + H(+). It catalyses the reaction L-aspartyl-tRNA(Asn) + L-glutamine + ATP + H2O = L-asparaginyl-tRNA(Asn) + L-glutamate + ADP + phosphate + 2 H(+). Its function is as follows. Allows the formation of correctly charged Asn-tRNA(Asn) or Gln-tRNA(Gln) through the transamidation of misacylated Asp-tRNA(Asn) or Glu-tRNA(Gln) in organisms which lack either or both of asparaginyl-tRNA or glutaminyl-tRNA synthetases. The reaction takes place in the presence of glutamine and ATP through an activated phospho-Asp-tRNA(Asn) or phospho-Glu-tRNA(Gln). This Chlorobium phaeobacteroides (strain DSM 266 / SMG 266 / 2430) protein is Aspartyl/glutamyl-tRNA(Asn/Gln) amidotransferase subunit B.